The chain runs to 92 residues: Small ribosomal subunit protein uS19c (92 aa).

It belongs to the universal ribosomal protein uS19 family.

The protein localises to the plastid. It localises to the chloroplast. Its function is as follows. Protein S19 forms a complex with S13 that binds strongly to the 16S ribosomal RNA. The polypeptide is Small ribosomal subunit protein uS19c (Gracilaria tenuistipitata var. liui (Red alga)).